Reading from the N-terminus, the 330-residue chain is Serine/threonine-protein phosphatase PP1-alpha catalytic subunit (330 aa).

Ser2 is modified (N-acetylserine). Phosphoserine is present on residues Ser2 and Ser22. Residues Asp64, His66, Asp92, and Asn124 each contribute to the Mn(2+) site. Catalysis depends on His125, which acts as the Proton donor. Positions 173 and 248 each coordinate Mn(2+). Lys305 is subject to N6-acetyllysine. At Tyr306 the chain carries Phosphotyrosine. The segment at 306–330 is disordered; sequence YGQFSGLNPGGRPITPPRNSAKAKK. Residue Thr320 is modified to Phosphothreonine. Ser325 is modified (phosphoserine).

This sequence belongs to the PPP phosphatase family. PP-1 subfamily. In terms of assembly, PP1 comprises a catalytic subunit, PPP1CA, PPP1CB or PPP1CC, which is folded into its native form by inhibitor 2 and glycogen synthetase kinase 3, and then complexed to one or several targeting or regulatory subunits. PPP1R12A, PPP1R12B and PPP1R12C mediate binding to myosin. PPP1R3A (in skeletal muscle), PPP1R3B (in liver), PPP1R3C, PPP1R3D and PPP1R3F (in brain) mediate binding to glycogen. Interacts with PPP1R39. Interacts with BTBD10. Interacts with KCTD20. Interacts with PPP1R9A and PPP1R9B. Part of a complex containing PPP1R15B, PP1 and NCK1/2. Interacts with PHACTR4; which acts as an activator of PP1 activity. Interacts with PPP1R15A and PPP1R15B; the interactions mediate binding to EIF2S1. Interacts with PPP1R7. Interacts with YLPM1. Forms a complex with ILF2, ILF3, YLPM1, KHDRBS1, RBMX and NCOA5. Interacts with NOM1 and PPP1R8. Interacts with PPP1R16B. Interacts with RPSA only in the presence of PPP1R16B. Component of the PNUTS-PP1 phosphatase complex, composed of PPP1R10/PNUTS, TOX4, WDR82, and PPP1CA or PPP1CB or PPP1CC. Interacts with PPP1R10/PNUTS and PPP1R8. Interacts with WDR82 in the presence of PPP1R10/PNUTS. Interacts with TRIM28; the interaction dephosphorylates TRIM28 on 'Ser-824' and forms a complex at the p21 promoter site. Interacts with isoform 1 and isoform 4 of NEK2. Interacts with FER; this promotes phosphorylation at Thr-320. Interacts with DAB2; the interaction is mutually exclusive with the AXIN1:PPP1CA interaction. Interacts with FOXP3. Interacts with CENPA. Interacts with ATG16L1. Found in a complex with PPP1CA, PPP1CC, SHC1 and PEAK1. Interacts with tensin TNS1. Interacts with SAXO4, PPP1R21, PPP1R26, PPP1R27, PPP1R35, PPP1R36, PPP1R37, SH3RF2, ELFN1 and ELFN2. Interacts with TPRN; the interaction results in inhibition of PPC1A phosphatase activity. Interacts with SKA1 (via C-terminus); the interaction is direct and required for the recruitment of PP1 to the kinetochore. Interacts with the KNL1 complex subunit KNL1; the interaction is direct and mutually exclusive with KNL1 binding to microtubules. Component of the SHOC2-MRAS-PP1c (SMP) complex consisting of SHOC2, GTP-bound M-Ras/MRAS and the catalytic subunit of protein phosphatase 1 (either PPP1CA, PPP1CB or PPP1CC). SHOC2 and PP1c preferably bind M-Ras/MRAS, but they also bind K-Ras/KRAS, N-Ras/NRAS and H-Ras/HRAS; these interactions are GTP-dependent and both SHOC2 and PP1c are required to form a stable complex. Interacts with SHOC2 in the absence of Ras GTPases. (Microbial infection) Interacts with HHV-1 ICP34.5. As to quaternary structure, (Microbial infection) Interacts with Venezuelan equine encephalitis virus (VEEV) capsid protein; this interaction dephosphorylates the capsid protein, which increases its ability to bind to the viral genome. Fe cation is required as a cofactor. Requires Mn(2+) as cofactor. In terms of processing, phosphorylated. Dephosphorylated at Thr-320 in the presence of ionizing radiation.

The protein resides in the cytoplasm. The protein localises to the nucleus. It is found in the nucleoplasm. It localises to the nucleolus. It catalyses the reaction O-phospho-L-seryl-[protein] + H2O = L-seryl-[protein] + phosphate. The enzyme catalyses O-phospho-L-threonyl-[protein] + H2O = L-threonyl-[protein] + phosphate. Its activity is regulated as follows. The phosphatase activity of the PPP1R15A-PP1 complex toward EIF2S1 is specifically inhibited by Salubrinal, a drug that protects cells from endoplasmic reticulum stress. Its function is as follows. Protein phosphatase that associates with over 200 regulatory proteins to form highly specific holoenzymes which dephosphorylate hundreds of biological targets. Protein phosphatase 1 (PP1) is essential for cell division, transcription elongation, and participates in the regulation of glycogen metabolism, muscle contractility and protein synthesis. Involved in regulation of ionic conductances and long-term synaptic plasticity. May play an important role in dephosphorylating substrates such as the postsynaptic density-associated Ca(2+)/calmodulin dependent protein kinase II. Catalytic component of the PNUTS-PP1 protein phosphatase complex, a protein phosphatase 1 (PP1) complex that promotes RNA polymerase II transcription pause-release, allowing transcription elongation: the PNUTS-PP1 complex mediates the release of RNA polymerase II from promoter-proximal region of genes by catalyzing dephosphorylation of proteins involved in transcription, such as AFF4, CDK9, MEPCE, INTS12, NCBP1, POLR2M/GDOWN1 and SUPT6H. The PNUTS-PP1 complex also regulates transcription termination by mediating dephosphorylation of SUPT5H in termination zones downstream of poly(A) sites, thereby promoting deceleration of RNA polymerase II transcription. PNUTS-PP1 complex is also involved in the response to replication stress by mediating dephosphorylation of POLR2A at 'Ser-5' of the CTD, promoting RNA polymerase II degradation. PNUTS-PP1 also plays a role in the control of chromatin structure and cell cycle progression during the transition from mitosis into interphase. Regulates NEK2 function in terms of kinase activity and centrosome number and splitting, both in the presence and absence of radiation-induced DNA damage. Regulator of neural tube and optic fissure closure, and enteric neural crest cell (ENCCs) migration during development. In balance with CSNK1D and CSNK1E, determines the circadian period length, through the regulation of the speed and rhythmicity of PER1 and PER2 phosphorylation. May dephosphorylate CSNK1D and CSNK1E. Dephosphorylates the 'Ser-418' residue of FOXP3 in regulatory T-cells (Treg) from patients with rheumatoid arthritis, thereby inactivating FOXP3 and rendering Treg cells functionally defective. Dephosphorylates CENPA. Dephosphorylates the 'Ser-139' residue of ATG16L1 causing dissociation of ATG12-ATG5-ATG16L1 complex, thereby inhibiting autophagy. Together with PPP1CC (PP1-gamma subunit), dephosphorylates IFIH1/MDA5 and RIG-I leading to their activation and a functional innate immune response. Core component of the SHOC2-MRAS-PP1c (SMP) holophosphatase complex that regulates the MAPK pathway activation. The SMP complex specifically dephosphorylates the inhibitory phosphorylation at 'Ser-259' of RAF1 kinase, 'Ser-365' of BRAF kinase and 'Ser-214' of ARAF kinase, stimulating their kinase activities. The SMP complex enhances the dephosphorylation activity and substrate specificity of PP1c. Functionally, (Microbial infection) Necessary for alphaviruses replication. The protein is Serine/threonine-protein phosphatase PP1-alpha catalytic subunit (PPP1CA) of Homo sapiens (Human).